We begin with the raw amino-acid sequence, 180 residues long: ATP synthase subunit delta (180 aa).

Belongs to the ATPase delta chain family. As to quaternary structure, F-type ATPases have 2 components, F(1) - the catalytic core - and F(0) - the membrane proton channel. F(1) has five subunits: alpha(3), beta(3), gamma(1), delta(1), epsilon(1). F(0) has three main subunits: a(1), b(2) and c(10-14). The alpha and beta chains form an alternating ring which encloses part of the gamma chain. F(1) is attached to F(0) by a central stalk formed by the gamma and epsilon chains, while a peripheral stalk is formed by the delta and b chains.

The protein localises to the cell inner membrane. Its function is as follows. F(1)F(0) ATP synthase produces ATP from ADP in the presence of a proton or sodium gradient. F-type ATPases consist of two structural domains, F(1) containing the extramembraneous catalytic core and F(0) containing the membrane proton channel, linked together by a central stalk and a peripheral stalk. During catalysis, ATP synthesis in the catalytic domain of F(1) is coupled via a rotary mechanism of the central stalk subunits to proton translocation. In terms of biological role, this protein is part of the stalk that links CF(0) to CF(1). It either transmits conformational changes from CF(0) to CF(1) or is implicated in proton conduction. This Paracidovorax citrulli (strain AAC00-1) (Acidovorax citrulli) protein is ATP synthase subunit delta.